Here is a 454-residue protein sequence, read N- to C-terminus: tRNA modification GTPase MnmE (454 aa).

Positions 23, 80, and 120 each coordinate (6S)-5-formyl-5,6,7,8-tetrahydrofolate. Positions 216 to 377 constitute a TrmE-type G domain; that stretch reads TIKIVIAGPP…LKNKILEITT (162 aa). Asn226 contacts K(+). Residues 226-231, 245-251, and 270-273 contribute to the GTP site; these read NVGKSS, TNIPGTT, and DTAG. Residue Ser230 coordinates Mg(2+). The K(+) site is built by Thr245, Ile247, and Thr250. A Mg(2+)-binding site is contributed by Thr251. Lys454 contributes to the (6S)-5-formyl-5,6,7,8-tetrahydrofolate binding site.

The protein belongs to the TRAFAC class TrmE-Era-EngA-EngB-Septin-like GTPase superfamily. TrmE GTPase family. Homodimer. Heterotetramer of two MnmE and two MnmG subunits. Requires K(+) as cofactor.

It is found in the cytoplasm. Its function is as follows. Exhibits a very high intrinsic GTPase hydrolysis rate. Involved in the addition of a carboxymethylaminomethyl (cmnm) group at the wobble position (U34) of certain tRNAs, forming tRNA-cmnm(5)s(2)U34. The polypeptide is tRNA modification GTPase MnmE (Buchnera aphidicola subsp. Cinara cedri (strain Cc)).